A 324-amino-acid chain; its full sequence is Malate dehydrogenase (324 aa).

NAD(+) contacts are provided by residues 10–15 (GAGAVG) and D34. Residues R88 and R94 each contribute to the substrate site. NAD(+) is bound by residues N101 and 124–126 (VTN). Substrate-binding residues include N126 and R157. The active-site Proton acceptor is H181.

Belongs to the LDH/MDH superfamily.

The enzyme catalyses (S)-malate + NAD(+) = oxaloacetate + NADH + H(+). Catalyzes the reversible oxidation of malate to oxaloacetate. This Picrophilus torridus (strain ATCC 700027 / DSM 9790 / JCM 10055 / NBRC 100828 / KAW 2/3) protein is Malate dehydrogenase (mdh).